A 526-amino-acid polypeptide reads, in one-letter code: Cytochrome P450 monooxygeanse terK (526 aa).

Residues 21 to 43 (NWGQLTGALLFLAACTWIYLPAF) form a helical membrane-spanning segment. Position 465 (Cys465) interacts with heme.

It belongs to the cytochrome P450 family. The cofactor is heme.

It is found in the membrane. Its pathway is secondary metabolite biosynthesis. Cytochrome P450 monooxygeanse; part of the gene cluster that mediates the biosynthesis of terpendoles, indole-diterpene (IDT) mycotoxins including terpendole I, terpendole K, terpendole C, as well as the kinesin Eg5 inhibitor terpendole E. Terpendoles biosynthesis begins with the synthesis of geranylgeranyl diphosphate (GGPP) by a yet unidentified GGPP synthase. Condensation of indole-3-glycerol phosphate with GGPP by the prenyltransferase terC then forms 3-geranylgeranylindole (3-GGI), followed by epoxidation and cyclization of this intermediate (by the FAD-dependent monooxygeanse terM and the terpene cyclase terB) to form paspaline. The cytochrome monooxygenase terQ then hydroxylates paspalline at C-11 to yield terpendole E. The cytochrome monooxygenase terP converts terpendole E to 13-desoxyterpendole I, and terQ converts 13-desoxyterpendole I into terpendole I. TerF and terK are required for conversion of terpendole I to terpendole C which is further converted to terpendole K. This Tolypocladium album (Soil fungus) protein is Cytochrome P450 monooxygeanse terK.